The primary structure comprises 330 residues: 7,8-didemethyl-8-hydroxy-5-deazariboflavin synthase (330 aa).

The region spanning 13–253 is the Radical SAM core domain; that stretch reads VTFSKNAFIP…EDISIQVPPN (241 aa). [4Fe-4S] cluster contacts are provided by C27, C31, and C34.

It belongs to the radical SAM superfamily. CofG family. In terms of assembly, consists of two subunits, CofG and CofH. It depends on [4Fe-4S] cluster as a cofactor.

It catalyses the reaction 5-amino-5-(4-hydroxybenzyl)-6-(D-ribitylimino)-5,6-dihydrouracil + S-adenosyl-L-methionine = 7,8-didemethyl-8-hydroxy-5-deazariboflavin + 5'-deoxyadenosine + L-methionine + NH4(+) + H(+). The protein operates within cofactor biosynthesis; coenzyme F0 biosynthesis. Functionally, catalyzes the radical-mediated synthesis of 7,8-didemethyl-8-hydroxy-5-deazariboflavin from 5-amino-5-(4-hydroxybenzyl)-6-(D-ribitylimino)-5,6-dihydrouracil. The sequence is that of 7,8-didemethyl-8-hydroxy-5-deazariboflavin synthase from Methanococcus maripaludis (strain DSM 14266 / JCM 13030 / NBRC 101832 / S2 / LL).